We begin with the raw amino-acid sequence, 303 residues long: Methionyl-tRNA formyltransferase (303 aa).

Ser110–Pro113 is a binding site for (6S)-5,6,7,8-tetrahydrofolate.

It belongs to the Fmt family.

The catalysed reaction is L-methionyl-tRNA(fMet) + (6R)-10-formyltetrahydrofolate = N-formyl-L-methionyl-tRNA(fMet) + (6S)-5,6,7,8-tetrahydrofolate + H(+). Attaches a formyl group to the free amino group of methionyl-tRNA(fMet). The formyl group appears to play a dual role in the initiator identity of N-formylmethionyl-tRNA by promoting its recognition by IF2 and preventing the misappropriation of this tRNA by the elongation apparatus. In Ehrlichia ruminantium (strain Gardel), this protein is Methionyl-tRNA formyltransferase.